Consider the following 86-residue polypeptide: DNA-directed RNA polymerase subunit omega (86 aa).

This sequence belongs to the RNA polymerase subunit omega family. The RNAP catalytic core consists of 2 alpha, 1 beta, 1 beta' and 1 omega subunit. When a sigma factor is associated with the core the holoenzyme is formed, which can initiate transcription.

The catalysed reaction is RNA(n) + a ribonucleoside 5'-triphosphate = RNA(n+1) + diphosphate. Its function is as follows. Promotes RNA polymerase assembly. Latches the N- and C-terminal regions of the beta' subunit thereby facilitating its interaction with the beta and alpha subunits. The polypeptide is DNA-directed RNA polymerase subunit omega (Agathobacter rectalis (strain ATCC 33656 / DSM 3377 / JCM 17463 / KCTC 5835 / VPI 0990) (Eubacterium rectale)).